A 333-amino-acid polypeptide reads, in one-letter code: tRNA-modifying protein YgfZ (333 aa).

2 residues coordinate folate: Trp-33 and Trp-195.

The protein belongs to the tRNA-modifying YgfZ family.

Its subcellular location is the cytoplasm. In terms of biological role, folate-binding protein involved in regulating the level of ATP-DnaA and in the modification of some tRNAs. It is probably a key factor in regulatory networks that act via tRNA modification, such as initiation of chromosomal replication. This Pectobacterium atrosepticum (strain SCRI 1043 / ATCC BAA-672) (Erwinia carotovora subsp. atroseptica) protein is tRNA-modifying protein YgfZ.